Here is a 346-residue protein sequence, read N- to C-terminus: NADH-ubiquinone oxidoreductase chain 2 (346 aa).

The next 11 helical transmembrane spans lie at 1–21 (MNPHATPVLVLSLALGTTITI), 25–45 (HWVLAWTGLEINTLAIIPLIS), 60–80 (FLTQAAASALVLFSSMTNAWA), 95–115 (CLLLTAAIAIKLGLVPFHFWF), 124–144 (LMTALLLSTLMKFPPLTLLLM), 149–169 (LNPALLTTMALASAALGGWMG), 178–195 (ILAFSSISHLGWIAIILV), 200–219 (LALLTFYLYTIMTSAVFMAL), 242–262 (ATLMLMLLSLAGLPPLTGFMP), 274–294 (EMTPAAMAIAMLSLLSLFFYL), and 326–346 (AILASLSILLLPLSPMVHAIV).

It belongs to the complex I subunit 2 family.

The protein resides in the mitochondrion inner membrane. It carries out the reaction a ubiquinone + NADH + 5 H(+)(in) = a ubiquinol + NAD(+) + 4 H(+)(out). In terms of biological role, core subunit of the mitochondrial membrane respiratory chain NADH dehydrogenase (Complex I) that is believed to belong to the minimal assembly required for catalysis. Complex I functions in the transfer of electrons from NADH to the respiratory chain. The immediate electron acceptor for the enzyme is believed to be ubiquinone. The protein is NADH-ubiquinone oxidoreductase chain 2 (MT-ND2) of Mareca penelope (Eurasian wigeon).